The sequence spans 412 residues: tRNA (guanine-N(7)-)-methyltransferase non-catalytic subunit WDR4 (412 aa).

Position 2 is an N-acetylalanine (A2). WD repeat units follow at residues 3-40 (GSVG…IYDC), 50-90 (NKGE…LFRT), 94-131 (QCLS…SFSV), 137-174 (CGRL…VSWA), 180-218 (IESF…LWEY), 230-273 (ASLQ…IFQL), and 319-373 (PVGD…SYLK). Residues 377 to 412 (ERLQQQLEKKQRRRSPPPGPDGHAKKMRPGEATLSC) are disordered. Residues S391 and S411 each carry the phosphoserine modification.

Belongs to the WD repeat TRM82 family. As to quaternary structure, non-catalytic component of the METTL1-WDR4 complex, composed of METTL1 and WDR4. Interacts with FEN1; the interaction is direct.

The protein resides in the nucleus. It localises to the chromosome. Its pathway is tRNA modification; N(7)-methylguanine-tRNA biosynthesis. Non-catalytic component of the METTL1-WDR4 methyltransferase complex required for the formation of N(7)-methylguanine in a subset of RNA species, such as tRNAs, mRNAs and microRNAs (miRNAs). In the METTL1-WDR4 methyltransferase complex, WDR4 acts as a scaffold for tRNA-binding. Required for the formation of N(7)-methylguanine at position 46 (m7G46) in a large subset of tRNAs that contain the 5'-RAGGU-3' motif within the variable loop. M7G46 interacts with C13-G22 in the D-loop to stabilize tRNA tertiary structure and protect tRNAs from decay. Also required for the formation of N(7)-methylguanine at internal sites in a subset of mRNAs. Also required for methylation of a specific subset of miRNAs, such as let-7. Independently of METTL1, also plays a role in genome stability: localizes at the DNA replication site and regulates endonucleolytic activities of FEN1. This chain is tRNA (guanine-N(7)-)-methyltransferase non-catalytic subunit WDR4, found in Homo sapiens (Human).